A 189-amino-acid polypeptide reads, in one-letter code: Ras-like protein 1 (189 aa).

Residue Gly10–Ser17 participates in GTP binding. Positions Tyr32 to Tyr40 match the Effector region motif. GTP-binding positions include Asp57–Gln61 and Asn116–Asp119. Cys186 is modified (cysteine methyl ester). Cys186 carries the S-geranylgeranyl cysteine lipid modification. Residues Lys187 to Leu189 constitute a propeptide, removed in mature form.

It belongs to the small GTPase superfamily. Ras family.

Its subcellular location is the cell membrane. The enzyme catalyses GTP + H2O = GDP + phosphate + H(+). With respect to regulation, alternates between an inactive form bound to GDP and an active form bound to GTP. Activated by a guanine nucleotide-exchange factor (GEF) and inactivated by a GTPase-activating protein (GAP). Ras proteins bind GDP/GTP and possess intrinsic GTPase activity. Plays a role in eye development by regulating cell growth, survival of postmitotic ommatidial cells and differentiation of photoreceptor cells. During larval development, mediates Ptth/tor signaling leading to the production of ecdysone, a hormone required for the initiation of metamorphosis. In Drosophila persimilis (Fruit fly), this protein is Ras-like protein 1.